A 363-amino-acid polypeptide reads, in one-letter code: NAD(P)H-quinone oxidoreductase subunit 1, chloroplastic (363 aa).

Transmembrane regions (helical) follow at residues 28 to 48 (WVFVPILIFIVGITISVLAIV), 98 to 118 (FSFGPAISVISIILSYSVIPF), 129 to 149 (IGVFLWIAISSIAPIGLLMSG), 253 to 273 (FGLFYVASYLNLLVSSLFVTV), 300 to 320 (VFVTIIGIFITLVKTFLFIFV), and 336 to 356 (LLNLGWKFLLPISLGNLLLTT).

The protein belongs to the complex I subunit 1 family. As to quaternary structure, NDH is composed of at least 16 different subunits, 5 of which are encoded in the nucleus.

Its subcellular location is the plastid. It is found in the chloroplast thylakoid membrane. The enzyme catalyses a plastoquinone + NADH + (n+1) H(+)(in) = a plastoquinol + NAD(+) + n H(+)(out). The catalysed reaction is a plastoquinone + NADPH + (n+1) H(+)(in) = a plastoquinol + NADP(+) + n H(+)(out). NDH shuttles electrons from NAD(P)H:plastoquinone, via FMN and iron-sulfur (Fe-S) centers, to quinones in the photosynthetic chain and possibly in a chloroplast respiratory chain. The immediate electron acceptor for the enzyme in this species is believed to be plastoquinone. Couples the redox reaction to proton translocation, and thus conserves the redox energy in a proton gradient. In Phaseolus vulgaris (Kidney bean), this protein is NAD(P)H-quinone oxidoreductase subunit 1, chloroplastic.